The sequence spans 621 residues: Very-long-chain aldehyde decarbonylase GL1-5 (621 aa).

5 helical membrane passes run 99 to 119 (IILS…GQHL), 126 to 146 (GAGL…YWFH), 186 to 206 (LLFS…IIAF), 224 to 244 (FELV…LMYT), and 332 to 352 (MWPL…SFTV). The Fatty acid hydroxylase domain maps to 138–272 (VEFLYYWFHR…MPFYDYIYNT (135 aa)).

This sequence belongs to the sterol desaturase family. As to quaternary structure, homodimer.

It localises to the endoplasmic reticulum membrane. The catalysed reaction is a long-chain fatty aldehyde + 2 NADPH + O2 + H(+) = a long-chain alkane + formate + 2 NADP(+) + H2O. In terms of biological role, aldehyde decarbonylase involved in the conversion of aldehydes to alkanes. Core component of a very-long-chain alkane synthesis complex. This is Very-long-chain aldehyde decarbonylase GL1-5 from Oryza sativa subsp. indica (Rice).